The sequence spans 492 residues: Cytochrome P450 26A1 (492 aa).

A heme-binding site is contributed by Cys438.

It belongs to the cytochrome P450 family. The cofactor is heme.

It is found in the endoplasmic reticulum membrane. The protein localises to the microsome membrane. It carries out the reaction all-trans-retinoate + reduced [NADPH--hemoprotein reductase] + O2 = all-trans-(4S)-hydroxyretinoate + oxidized [NADPH--hemoprotein reductase] + H2O + H(+). Its function is as follows. A cytochrome P450 monooxygenase involved in the metabolism of all-trans retinoic acid (atRA), a signaling molecule that binds to retinoic acid receptors and regulates gene transcription. Mechanistically, uses molecular oxygen inserting one oxygen atom into a substrate, and reducing the second into a water molecule, with two electrons provided by NADPH via cytochrome P450 reductase (CPR; NADPH-ferrihemoprotein reductase). Catalyzes the hydroxylation of carbon hydrogen bonds of atRA primarily at C-4. Has no activity toward 9-cis and 13-cis retinoic acid stereoisomers. May play a role in the oxidative metabolism of xenobiotics such as tazarotenic acid. In Danio rerio (Zebrafish), this protein is Cytochrome P450 26A1 (cyp26a1).